A 386-amino-acid chain; its full sequence is Alanine racemase (386 aa).

Catalysis depends on Lys-38, which acts as the Proton acceptor; specific for D-alanine. Lys-38 carries the post-translational modification N6-(pyridoxal phosphate)lysine. Residue Arg-136 participates in substrate binding. Tyr-267 (proton acceptor; specific for L-alanine) is an active-site residue. Met-315 lines the substrate pocket.

It belongs to the alanine racemase family. Pyridoxal 5'-phosphate serves as cofactor.

The enzyme catalyses L-alanine = D-alanine. The protein operates within amino-acid biosynthesis; D-alanine biosynthesis; D-alanine from L-alanine: step 1/1. Its function is as follows. Catalyzes the interconversion of L-alanine and D-alanine. May also act on other amino acids. The polypeptide is Alanine racemase (alr) (Clostridium perfringens (strain ATCC 13124 / DSM 756 / JCM 1290 / NCIMB 6125 / NCTC 8237 / Type A)).